The sequence spans 180 residues: MSEYASSIHSQMKQFDTKYSGNRILQQLENKTNLPKSYLVAGLGFAYLLLIFINVGGVGEILSNFAGFVLPAYLSLVALKTPTSTDDTQLLTYWIVFSFLSVIEFWSKAILYLIPFYWFLKTVFLIYIALPQTGGARMIYQKIVAPLTDRYILRDVSKTEKDEIRASVNEASKATGASVH.

Residue serine 2 is modified to N-acetylserine. The tract at residues 2-17 (SEYASSIHSQMKQFDT) is interaction with YIP1. The Cytoplasmic portion of the chain corresponds to 2–35 (SEYASSIHSQMKQFDTKYSGNRILQQLENKTNLP). A helical membrane pass occupies residues 36–55 (KSYLVAGLGFAYLLLIFINV). Topologically, residues 56–57 (GG) are lumenal. Residues 58-78 (VGEILSNFAGFVLPAYLSLVA) traverse the membrane as a helical segment. At 79–88 (LKTPTSTDDT) the chain is on the cytoplasmic side. The helical transmembrane segment at 89 to 105 (QLLTYWIVFSFLSVIEF) threads the bilayer. The Lumenal segment spans residues 106–108 (WSK). The chain crosses the membrane as a helical span at residues 109–127 (AILYLIPFYWFLKTVFLIY). The Cytoplasmic portion of the chain corresponds to 128-180 (IALPQTGGARMIYQKIVAPLTDRYILRDVSKTEKDEIRASVNEASKATGASVH).

Belongs to the DP1 family. As to quaternary structure, oligomer. Interacts with YIP1.

The protein resides in the endoplasmic reticulum membrane. The protein localises to the golgi apparatus membrane. Functionally, required to generate and maintain the structure of the tubular endoplasmic reticulum network and the vacuole. Induces high curvature in membranes and causes membrane tubule formation. Involved in membrane/vesicle trafficking. This chain is Protein YOP1 (YOP1), found in Saccharomyces cerevisiae (strain ATCC 204508 / S288c) (Baker's yeast).